The primary structure comprises 184 residues: Dual specificity protein phosphatase 22 (184 aa).

Gly2 carries the N-myristoyl glycine lipid modification. Residues 4 to 144 form the Tyrosine-protein phosphatase domain; the sequence is GMSQILPGLY…LQEFEKHEVH (141 aa). Cys88 functions as the Phosphocysteine intermediate in the catalytic mechanism. Leu89, Ala90, Val92, Ser93, and Arg94 together coordinate a protein.

This sequence belongs to the protein-tyrosine phosphatase family. Non-receptor class dual specificity subfamily. In terms of assembly, monomer. Interacts with LCK; the interaction is direct. Interacts with UBR2; the interaction is direct. Post-translationally, myristoylation regulates subcellular location, and is necessary for activation of JNK.

Its subcellular location is the cytoplasm. The catalysed reaction is O-phospho-L-tyrosyl-[protein] + H2O = L-tyrosyl-[protein] + phosphate. The enzyme catalyses O-phospho-L-seryl-[protein] + H2O = L-seryl-[protein] + phosphate. It carries out the reaction O-phospho-L-threonyl-[protein] + H2O = L-threonyl-[protein] + phosphate. Dual specificity phosphatase; can dephosphorylate both phosphotyrosine and phosphoserine or phosphothreonine residues. Activates the JNK signaling pathway. Inhibits T-cell receptor signaling and T-cell mediated immune responses, acting, at least in part, by inducing degradation of E3 ubiquitin ligase UBR2. Dephosphorylates and thereby induces 'Lys-48'-linked ubiquitination of UBR2, leading to proteasomal degradation of UBR2. Dephosphorylates and thereby inactivates tyrosine kinase LCK. Inhibits UBR2-mediated 'Lys-63'-linked ubiquitination of LCK. May play a role in B-cell receptor (BCR) signaling and B-cell function. This Mus musculus (Mouse) protein is Dual specificity protein phosphatase 22 (Dusp22).